We begin with the raw amino-acid sequence, 941 residues long: MDRSSKRRQVKPLAASLLEALDYDSSDDSDFKVGDASDSEGSGNGSEDPSKDSGEGSCSDSEENILEEELNEDIQVKEEQLKNSTEEIMPSDKQLIKMEKKEEEENGERPRKKKEKEKEKEKEREKDKEKATVSDSAAASAAGTTPATSPPAVTSPSVPTTTTTTTEEQVSEPKKWNLRRNRPLLDFVSMEELNAMDDYDSEDDNDWRPTVVKRKGRSASQKEGSDGDNEDDDDEGSGSEEDENDEGNDEDHSSPASEAGGKKKRSKVLSRNSADDEELTNDSLTLSQSKSNEDSLILEKSQNWSSQKMDHILICCVCLGDNSEDADEIIQCDNCGITVHEGCYGVDGESDSIMSSASENSTEPWFCDACKCGVSPSCELCPNQDGIFKETDAGRWVHIVCALYVPGVAFGDIDKLRPVTLTEMNYSKYGAKECSFCEDPRFARTGVCISCDAGMCRAYFHVTCAQKEGLLSEAAAEEDIADPFFAYCKQHADRLDRKWKRKNYLALQSYCKMSLQEREKQLSPEAQARINARLQQYRAKAELARSTRPQAWVPREKLPRPLTSSASAIRKLMRKAELMGISTDIFPVDNSDTSSSVDGRRKHKQPALTADFVNYYFERNMRMIQIQENMAEQKNIKDKLENEQEKLHVEYNKLCESLEELQNLNGKLRSEGQGIWALLGRITGQKLNVPAILRAPKERKPSKKEGGTQKTSALPTVLYSCGICKKNHDQHLLLLCDTCKLHYHLGCLDPPLTRMPRKTKNSYWQCSECDQAGSSDMEAEMAMETLPDGTKRSRRQIKEPVKFVPQDVPPEPKKIPIRNTRTRGRKRSFVPEEEKHEERVPRERRQRQSVLQKKPKAEDLRTECSTCKGTGDNENLVRCDECRLCYHFGCLDPPLKKSPKQTGYGWICQECDSSSSKEDENEAEKKNASQELSMEQKTPKK.

The tract at residues 22–295 is disordered; it reads DYDSSDDSDF…LSQSKSNEDS (274 aa). Phosphoserine is present on residues S26 and S29. Residues 36 to 47 are compositionally biased toward low complexity; it reads ASDSEGSGNGSE. Over residues 60-72 the composition is skewed to acidic residues; the sequence is DSEENILEEELNE. Composition is skewed to basic and acidic residues over residues 74-85, 94-109, and 116-132; these read IQVKEEQLKNST, QLIK…NGER, and KEKE…EKAT. The residue at position 84 (S84) is a Phosphoserine. Positions 133–166 are enriched in low complexity; sequence VSDSAAASAAGTTPATSPPAVTSPSVPTTTTTTT. Residue S189 is modified to Phosphoserine. Composition is skewed to acidic residues over residues 194–205 and 226–249; these read NAMDDYDSEDDN and DGDN…EGND. Y199 carries the phosphotyrosine modification. S201 bears the Phosphoserine mark. T280 is modified (phosphothreonine). A compositionally biased stretch (polar residues) spans 281 to 290; sequence NDSLTLSQSK. A phosphoserine mark is found at S283, S287, S291, S295, and S301. Residues 312–373 form a PHD-type 1 zinc finger; it reads ILICCVCLGD…PWFCDACKCG (62 aa). Zn(2+) is bound by residues C315, C318, C332, C335, H340, and C343. S352 is subject to Phosphoserine. The Zn(2+) site is built by C367, C370, C378, C381, H398, C401, C434, C437, C451, C456, H461, C464, C488, and H491. A C2HC pre-PHD-type zinc finger spans residues 375–408; sequence SPSCELCPNQDGIFKETDAGRWVHIVCALYVPGV. Residues 432–492 form a PHD-type 2 zinc finger; that stretch reads KECSFCEDPR…PFFAYCKQHA (61 aa). S523 is modified (phosphoserine). The stretch at 623-671 forms a coiled coil; that stretch reads MIQIQENMAEQKNIKDKLENEQEKLHVEYNKLCESLEELQNLNGKLRSE. A PHD-type 3 zinc finger spans residues 718 to 772; it reads LYSCGICKKNHDQHLLLLCDTCKLHYHLGCLDPPLTRMPRKTKNSYWQCSECDQA. C721, C724, C736, C739, H744, C747, C766, and C769 together coordinate Zn(2+). Phosphoserine occurs at positions 774, 775, and 828. Positions 804–855 are disordered; the sequence is VPQDVPPEPKKIPIRNTRTRGRKRSFVPEEEKHEERVPRERRQRQSVLQKKP. Residues 829–843 are compositionally biased toward basic and acidic residues; that stretch reads FVPEEEKHEERVPRE. The segment at 861-914 adopts a PHD-type 4 zinc-finger fold; it reads RTECSTCKGTGDNENLVRCDECRLCYHFGCLDPPLKKSPKQTGYGWICQECDSS. Residues C864, C867, C879, C882, H887, C890, C908, and C911 each contribute to the Zn(2+) site. Residues 912-941 form a disordered region; it reads DSSSSKEDENEAEKKNASQELSMEQKTPKK. Residues 915–928 are compositionally biased toward basic and acidic residues; that stretch reads SSKEDENEAEKKNA. Residues 930 to 941 are compositionally biased toward polar residues; it reads QELSMEQKTPKK.

In terms of tissue distribution, high levels detected in testis, lung and spleen and low levels in muscle, heart, intestine and kidney (at protein level). Widely expressed in adult with increased levels in intestine, colon and lung.

It is found in the nucleus. Its subcellular location is the chromosome. It localises to the cytoplasm. Functionally, histone-binding protein. Binds preferentially to unmodified histone H3 but can also bind to a lesser extent to histone H3 trimethylated at 'Lys-9' (H3K9me3) as well as to histone H3 monomethylated at 'Lys-27' (H3K27ac) and trimethylated at 'Lys-27' (H3K27me3). Represses PDGFRA expression, thus playing a role in regulation of mesenchymal cell proliferation. Suppresses the expression of CDKN1A/p21 by reducing the level of trimethylation of histone H3 'Lys-4', leading to enhanced proliferation of germinal center B cells. This Mus musculus (Mouse) protein is PHD finger protein 14 (Phf14).